A 695-amino-acid polypeptide reads, in one-letter code: Probable glutamine--tRNA ligase (695 aa).

The 'HIGH' region motif lies at 201-211 (PEPNGILHIGH). ATP is bound by residues 202–204 (EPN) and 208–214 (HIGHAKA). Residues Asp234 and Tyr391 each contribute to the L-glutamine site. ATP-binding positions include Thr410, 439–440 (RL), and 447–449 (LSK). A 'KMSKS' region motif is present at residues 446 to 450 (VLSKR).

This sequence belongs to the class-I aminoacyl-tRNA synthetase family.

It catalyses the reaction tRNA(Gln) + L-glutamine + ATP = L-glutaminyl-tRNA(Gln) + AMP + diphosphate. In Vairimorpha ceranae (strain BRL01) (Microsporidian parasite), this protein is Probable glutamine--tRNA ligase.